The primary structure comprises 344 residues: Phenylalanine--tRNA ligase alpha subunit (344 aa).

Residue E255 coordinates Mg(2+).

Belongs to the class-II aminoacyl-tRNA synthetase family. Phe-tRNA synthetase alpha subunit type 1 subfamily. As to quaternary structure, tetramer of two alpha and two beta subunits. Requires Mg(2+) as cofactor.

It localises to the cytoplasm. It catalyses the reaction tRNA(Phe) + L-phenylalanine + ATP = L-phenylalanyl-tRNA(Phe) + AMP + diphosphate + H(+). This chain is Phenylalanine--tRNA ligase alpha subunit, found in Cytophaga hutchinsonii (strain ATCC 33406 / DSM 1761 / CIP 103989 / NBRC 15051 / NCIMB 9469 / D465).